We begin with the raw amino-acid sequence, 268 residues long: Ubiquinone biosynthesis protein COQ4 homolog, mitochondrial (268 aa).

4 residues coordinate Zn(2+): H171, D172, H175, and E187.

The protein belongs to the COQ4 family. Component of a multi-subunit COQ enzyme complex. Requires Zn(2+) as cofactor.

It localises to the mitochondrion inner membrane. The catalysed reaction is a 4-hydroxy-3-methoxy-5-(all-trans-polyprenyl)benzoate + H(+) = a 2-methoxy-6-(all-trans-polyprenyl)phenol + CO2. It functions in the pathway cofactor biosynthesis; ubiquinone biosynthesis. In terms of biological role, lyase that catalyzes the C1-decarboxylation of 4-hydroxy-3-methoxy-5-(all-trans-polyprenyl)benzoic acid into 2-methoxy-6-(all-trans-polyprenyl)phenol during ubiquinone biosynthesis. The chain is Ubiquinone biosynthesis protein COQ4 homolog, mitochondrial from Drosophila melanogaster (Fruit fly).